Consider the following 196-residue polypeptide: Probable splicing factor, arginine/serine-rich 4 (196 aa).

In terms of domain architecture, RRM spans 19–97; it reads TSLKIDNLSY…RELRVTLAKY (79 aa). A compositionally biased stretch (basic and acidic residues) spans 91 to 106; sequence RVTLAKYDRPSDERGG. The tract at residues 91–196 is disordered; it reads RVTLAKYDRP…SPSRSRSNSR (106 aa). Basic residues predominate over residues 112-141; that stretch reads GRRRSRSPRRRSRSPRYSRSRSPRRSRSRT. Composition is skewed to basic and acidic residues over residues 145–160 and 167–176; these read PSRDRRDSPDRRDNSR and PPREDGSPKE. Residues 184 to 196 are compositionally biased toward low complexity; it reads ASRSPSRSRSNSR.

The protein belongs to the splicing factor SR family. In terms of processing, extensively phosphorylated on serine residues in the RS domain.

The protein resides in the nucleus. May play a functionally redundant role in embryogenesis. In Caenorhabditis elegans, this protein is Probable splicing factor, arginine/serine-rich 4 (rsp-4).